Here is a 284-residue protein sequence, read N- to C-terminus: Probable endonuclease 4 (284 aa).

The Zn(2+) site is built by His66, His106, Glu142, Asp176, His179, His213, Asp226, His228, and Glu258.

The protein belongs to the AP endonuclease 2 family. Requires Zn(2+) as cofactor.

The catalysed reaction is Endonucleolytic cleavage to 5'-phosphooligonucleotide end-products.. In terms of biological role, endonuclease IV plays a role in DNA repair. It cleaves phosphodiester bonds at apurinic or apyrimidinic (AP) sites, generating a 3'-hydroxyl group and a 5'-terminal sugar phosphate. The polypeptide is Probable endonuclease 4 (Natranaerobius thermophilus (strain ATCC BAA-1301 / DSM 18059 / JW/NM-WN-LF)).